We begin with the raw amino-acid sequence, 493 residues long: Glycerol kinase (493 aa).

Thr-11 contributes to the ADP binding site. Residues Thr-11, Thr-12, and Ser-13 each coordinate ATP. A sn-glycerol 3-phosphate-binding site is contributed by Thr-11. An ADP-binding site is contributed by Arg-15. Sn-glycerol 3-phosphate contacts are provided by Arg-80, Glu-81, Tyr-132, and Asp-241. Glycerol contacts are provided by Arg-80, Glu-81, Tyr-132, Asp-241, and Gln-242. Residues Thr-263 and Gly-306 each coordinate ADP. Residues Thr-263, Gly-306, Gln-310, and Gly-408 each coordinate ATP. An ADP-binding site is contributed by Gly-408.

It belongs to the FGGY kinase family.

The catalysed reaction is glycerol + ATP = sn-glycerol 3-phosphate + ADP + H(+). It participates in polyol metabolism; glycerol degradation via glycerol kinase pathway; sn-glycerol 3-phosphate from glycerol: step 1/1. With respect to regulation, inhibited by fructose 1,6-bisphosphate (FBP). In terms of biological role, key enzyme in the regulation of glycerol uptake and metabolism. Catalyzes the phosphorylation of glycerol to yield sn-glycerol 3-phosphate. The sequence is that of Glycerol kinase from Cereibacter sphaeroides (strain ATCC 17025 / ATH 2.4.3) (Rhodobacter sphaeroides).